A 158-amino-acid chain; its full sequence is 6,7-dimethyl-8-ribityllumazine synthase (158 aa).

Residues phenylalanine 18, 50 to 52 (SYD), and 74 to 76 (AVI) contribute to the 5-amino-6-(D-ribitylamino)uracil site. Position 79 to 80 (79 to 80 (ET)) interacts with (2S)-2-hydroxy-3-oxobutyl phosphate. Histidine 82 (proton donor) is an active-site residue. Leucine 107 contacts 5-amino-6-(D-ribitylamino)uracil. Residue arginine 122 coordinates (2S)-2-hydroxy-3-oxobutyl phosphate.

It belongs to the DMRL synthase family.

It carries out the reaction (2S)-2-hydroxy-3-oxobutyl phosphate + 5-amino-6-(D-ribitylamino)uracil = 6,7-dimethyl-8-(1-D-ribityl)lumazine + phosphate + 2 H2O + H(+). The protein operates within cofactor biosynthesis; riboflavin biosynthesis; riboflavin from 2-hydroxy-3-oxobutyl phosphate and 5-amino-6-(D-ribitylamino)uracil: step 1/2. Its function is as follows. Catalyzes the formation of 6,7-dimethyl-8-ribityllumazine by condensation of 5-amino-6-(D-ribitylamino)uracil with 3,4-dihydroxy-2-butanone 4-phosphate. This is the penultimate step in the biosynthesis of riboflavin. The protein is 6,7-dimethyl-8-ribityllumazine synthase of Sulfolobus acidocaldarius (strain ATCC 33909 / DSM 639 / JCM 8929 / NBRC 15157 / NCIMB 11770).